Here is a 195-residue protein sequence, read N- to C-terminus: Dephospho-CoA kinase (195 aa).

A DPCK domain is found at 4-195; sequence IIGLTGGIAS…EQILDALQRL (192 aa). Position 12-17 (12-17) interacts with ATP; the sequence is ASGKST.

It belongs to the CoaE family.

It is found in the cytoplasm. The catalysed reaction is 3'-dephospho-CoA + ATP = ADP + CoA + H(+). The protein operates within cofactor biosynthesis; coenzyme A biosynthesis; CoA from (R)-pantothenate: step 5/5. In terms of biological role, catalyzes the phosphorylation of the 3'-hydroxyl group of dephosphocoenzyme A to form coenzyme A. The polypeptide is Dephospho-CoA kinase (Streptococcus agalactiae serotype Ia (strain ATCC 27591 / A909 / CDC SS700)).